Consider the following 120-residue polypeptide: Seripauperin-10 (120 aa).

An N-terminal signal peptide occupies residues M1–A20.

Belongs to the SRP1/TIP1 family. Seripauperin subfamily.

In Saccharomyces cerevisiae (strain ATCC 204508 / S288c) (Baker's yeast), this protein is Seripauperin-10 (PAU10).